A 496-amino-acid chain; its full sequence is Cytochrome P450 71D181 (496 aa).

A helical; Signal-anchor for type II membrane protein transmembrane segment spans residues Met1–Met21. Position 435 (Cys435) interacts with heme. Residues Met471–Ser496 form a disordered region.

This sequence belongs to the cytochrome P450 family. The cofactor is heme.

Its subcellular location is the membrane. The catalysed reaction is gamma-terpinene + 2 reduced [NADPH--hemoprotein reductase] + 2 O2 = carvacrol + 2 oxidized [NADPH--hemoprotein reductase] + 3 H2O + 2 H(+). The enzyme catalyses (4S)-limonene + reduced [NADPH--hemoprotein reductase] + O2 = (1S,5R)-carveol + oxidized [NADPH--hemoprotein reductase] + H2O + H(+). It catalyses the reaction (4R)-limonene + reduced [NADPH--hemoprotein reductase] + O2 = (1R,5S)-carveol + oxidized [NADPH--hemoprotein reductase] + H2O + H(+). It carries out the reaction alpha-terpinene + 2 reduced [NADPH--hemoprotein reductase] + 2 O2 = carvacrol + 2 oxidized [NADPH--hemoprotein reductase] + 3 H2O + 2 H(+). Its pathway is secondary metabolite biosynthesis; terpenoid biosynthesis. In terms of biological role, involved in the biosynthesis of phenolic monoterpenes natural products thymol and carvacrol which have a broad range of biological activities acting as antimicrobial compounds, insecticides, antioxidants and pharmaceutical agents. Catalyzes the C2-hydroxylation of gamma-terpinene and alpha-terpinene to produce carvacrol. Also mediates the C6-hydroxylation of (4S)-limonene and (4R)-limonene to form carveol. This is Cytochrome P450 71D181 from Thymus vulgaris (Thyme).